A 248-amino-acid polypeptide reads, in one-letter code: Triosephosphate isomerase (248 aa).

9–11 (NWK) serves as a coordination point for substrate. Histidine 92 serves as the catalytic Electrophile. The active-site Proton acceptor is the glutamate 164. Substrate-binding positions include glycine 170, serine 209, and 230-231 (GG).

Belongs to the triosephosphate isomerase family. Homodimer.

Its subcellular location is the cytoplasm. It catalyses the reaction D-glyceraldehyde 3-phosphate = dihydroxyacetone phosphate. It functions in the pathway carbohydrate biosynthesis; gluconeogenesis. The protein operates within carbohydrate degradation; glycolysis; D-glyceraldehyde 3-phosphate from glycerone phosphate: step 1/1. Functionally, involved in the gluconeogenesis. Catalyzes stereospecifically the conversion of dihydroxyacetone phosphate (DHAP) to D-glyceraldehyde-3-phosphate (G3P). In Thiobacillus denitrificans (strain ATCC 25259 / T1), this protein is Triosephosphate isomerase.